Reading from the N-terminus, the 270-residue chain is Catechol 1,2-dioxygenase (270 aa).

Residues Tyr-152, Tyr-186, His-210, and His-212 each coordinate Fe cation.

The protein belongs to the intradiol ring-cleavage dioxygenase family. The cofactor is Fe(3+).

It carries out the reaction catechol + O2 = cis,cis-muconate + 2 H(+). This Rhodococcus opacus (Nocardia opaca) protein is Catechol 1,2-dioxygenase (catA).